We begin with the raw amino-acid sequence, 432 residues long: Adenylosuccinate synthetase (432 aa).

Residues Gly13 to Lys19 and Gly41 to Thr43 each bind GTP. Asp14 serves as the catalytic Proton acceptor. 2 residues coordinate Mg(2+): Asp14 and Gly41. IMP is bound by residues Asp14–Lys17, Asn39–His42, Thr130, Arg144, Gln225, Thr240, and Arg304. The Proton donor role is filled by His42. Residue Ala300–Arg306 coordinates substrate. GTP contacts are provided by residues Arg306, Lys332–Asp334, and Ser415–Gly417.

The protein belongs to the adenylosuccinate synthetase family. As to quaternary structure, homodimer. Requires Mg(2+) as cofactor.

It localises to the cytoplasm. The catalysed reaction is IMP + L-aspartate + GTP = N(6)-(1,2-dicarboxyethyl)-AMP + GDP + phosphate + 2 H(+). The protein operates within purine metabolism; AMP biosynthesis via de novo pathway; AMP from IMP: step 1/2. In terms of biological role, plays an important role in the de novo pathway of purine nucleotide biosynthesis. Catalyzes the first committed step in the biosynthesis of AMP from IMP. This is Adenylosuccinate synthetase from Marinomonas sp. (strain MWYL1).